The chain runs to 295 residues: Protoheme IX farnesyltransferase (295 aa).

The next 9 membrane-spanning stretches (helical) occupy residues 9–29 (ITKP…FFLA), 36–56 (FGVF…GCVF), 80–100 (LVSL…GVAL), 108–128 (LAAL…SLYL), 135–155 (GTLV…CAVT), 163–183 (LTLL…IAIF), 209–229 (IMLY…GGYA), 230–250 (GLNY…MAWK), and 265–285 (FVFS…DFQV).

This sequence belongs to the UbiA prenyltransferase family. Protoheme IX farnesyltransferase subfamily.

Its subcellular location is the cell inner membrane. The enzyme catalyses heme b + (2E,6E)-farnesyl diphosphate + H2O = Fe(II)-heme o + diphosphate. Its pathway is porphyrin-containing compound metabolism; heme O biosynthesis; heme O from protoheme: step 1/1. In terms of biological role, converts heme B (protoheme IX) to heme O by substitution of the vinyl group on carbon 2 of heme B porphyrin ring with a hydroxyethyl farnesyl side group. This is Protoheme IX farnesyltransferase from Pseudomonas savastanoi pv. phaseolicola (strain 1448A / Race 6) (Pseudomonas syringae pv. phaseolicola (strain 1448A / Race 6)).